Here is an 87-residue protein sequence, read N- to C-terminus: Small ribosomal subunit protein bS20 (87 aa).

The segment at methionine 1–arginine 20 is disordered.

Belongs to the bacterial ribosomal protein bS20 family.

Binds directly to 16S ribosomal RNA. This is Small ribosomal subunit protein bS20 from Corynebacterium efficiens (strain DSM 44549 / YS-314 / AJ 12310 / JCM 11189 / NBRC 100395).